The chain runs to 291 residues: Taste receptor type 2 member 16 (291 aa).

A topological domain (extracellular) is located at residue M1. Residues 2-22 traverse the membrane as a helical segment; the sequence is IPIQLTVFFMIIYVLESLTII. Residues 23–41 are Cytoplasmic-facing; that stretch reads VQSSLIVAVLGREWLQVRR. Residues 42–62 form a helical membrane-spanning segment; that stretch reads LMPVDMILISLGISRFCLQWA. Residues 63-84 are Extracellular-facing; the sequence is SMLNNFCSYFNLNYVLCNLTIT. N80 carries N-linked (GlcNAc...) asparagine glycosylation. A helical transmembrane segment spans residues 85–105; that stretch reads WEFFNILTFWLNSLLTVFYCI. Residues 106–125 are Cytoplasmic-facing; the sequence is KASSFTHHIFLWLRWRILRL. Residues 126-146 form a helical membrane-spanning segment; it reads FPWILLGSLMITCVTIIPSAI. Residues 147 to 182 lie on the Extracellular side of the membrane; sequence GNYIQIQLLTMEHLPRNSTVTDKLEKFHQYQFQAHT. A glycan (N-linked (GlcNAc...) asparagine) is linked at N163. The helical transmembrane segment at 183–203 threads the bilayer; that stretch reads VALVIPFILFLASTILLMASL. Over 204–228 the chain is Cytoplasmic; that stretch reads TKQIQHHSTGHCNPSMKAHFTALRS. The helical transmembrane segment at 229–249 threads the bilayer; the sequence is LAVLFIVFTSYFLTILITIIG. Residues 250 to 257 lie on the Extracellular side of the membrane; sequence TLFDKRCW. The chain crosses the membrane as a helical span at residues 258–278; the sequence is LWVWEAFVYAFILMHSTSLML. Over 279-291 the chain is Cytoplasmic; the sequence is SSPTLKRILKGKC.

Belongs to the G-protein coupled receptor T2R family. Interacts with RTP3 and RTP4.

It localises to the cell membrane. Receptor that may play a role in the perception of bitterness and is gustducin-linked. May play a role in sensing the chemical composition of the gastrointestinal content. The activity of this receptor may stimulate alpha gustducin, mediate PLC-beta-2 activation and lead to the gating of TRPM5. In Pan paniscus (Pygmy chimpanzee), this protein is Taste receptor type 2 member 16 (TAS2R16).